Reading from the N-terminus, the 499-residue chain is Alpha-L-arabinofuranosidase B (499 aa).

The signal sequence occupies residues 1-18 (MFSRRNLVALGLAATVSA). 2 N-linked (GlcNAc...) asparagine glycosylation sites follow: Asn83 and Asn202.

It belongs to the glycosyl hydrolase 54 family.

It catalyses the reaction Hydrolysis of terminal non-reducing alpha-L-arabinofuranoside residues in alpha-L-arabinosides.. Its pathway is glycan metabolism; L-arabinan degradation. Able to hydrolyze 1,5-, 1,3- and 1,2-alpha-linkages not only in L-arabinofuranosyl oligosaccharides, but also in polysac-charides containing terminal non-reducing L-arabinofuranoses in side chains, like L-arabinan, arabinogalactan and arabinoxylan. The sequence is that of Alpha-L-arabinofuranosidase B (abfB) from Aspergillus niger.